Consider the following 299-residue polypeptide: Prohibitin-2 (299 aa).

Position 2 is an N-acetylalanine (A2). The segment at 19-49 is necessary for transcriptional repression; that stretch reads MGTALKLLLGAGAVAYGIRESVFTVEGGHRA. Y128 carries the post-translational modification Phosphotyrosine. K147 bears the N6-acetyllysine mark. The segment at 150–174 is necessary for transcriptional repression; it reads ASQLITQRAQVSLLIRRELTERAKD. S151 bears the Phosphoserine mark. The stretch at 190–238 forms a coiled coil; that stretch reads SREYTAAVEAKQVAQQEAQRAQFLVEKAKQEQRQKIVQAEGEAEAARML. N6-acetyllysine occurs at positions 200, 250, and 262.

It belongs to the prohibitin family. In terms of assembly, the mitochondrial prohibitin complex consists of two subunits (PHB1 and PHB2), assembled into a membrane-associated ring-shaped supercomplex of approximately 1 mDa. Interacts with ESR1, HDAC1 and HDAC5. Interacts with ZNF703. Interacts with STOML2. Interacts with ARFGEF3. Interacts with SPHK2. Interacts with COX4I1; the interaction associates PHB2 with COX. Interacts with MAP1LC3B (membrane-bound form LC3-II); the interaction is direct and upon mitochondrial depolarization and proteasome-dependent outer membrane rupture. Interacts with IGFBP6 (via C-terminal domain). Interacts with CLPB. Interacts with CD86 (via cytoplasmic domain); the interactions increases after priming with CD40. Interacts with AFG3L2. Interacts with DNAJC19. Interacts with AKT2; this interaction may be important for myogenic differentiation. In terms of processing, phosphorylated. Tyrosine phosphorylation is indirectly stimulated by IGFBP6.

It localises to the mitochondrion inner membrane. It is found in the cytoplasm. The protein localises to the nucleus. Its subcellular location is the cell membrane. Functionally, protein with pleiotropic attributes mediated in a cell-compartment- and tissue-specific manner, which include the plasma membrane-associated cell signaling functions, mitochondrial chaperone, and transcriptional co-regulator of transcription factors and sex steroid hormones in the nucleus. Its function is as follows. In the mitochondria, together with PHB, forms large ring complexes (prohibitin complexes) in the inner mitochondrial membrane (IMM) and functions as a chaperone protein that stabilizes mitochondrial respiratory enzymes and maintains mitochondrial integrity in the IMM, which is required for mitochondrial morphogenesis, neuronal survival, and normal lifespan. The prohibitin complex, with DNAJC19, regulates cardiolipin remodeling and the protein turnover of OMA1 in a cardiolipin-binding manner. Also regulates cytochrome-c oxidase assembly (COX) and mitochondrial respiration. Binding to sphingoid 1-phosphate (SPP) modulates its regulator activity. Has a key role of mitophagy receptor involved in targeting mitochondria for autophagic degradation. Involved in mitochondrial-mediated antiviral innate immunity, activates RIG-I-mediated signal transduction and production of IFNB1 and pro-inflammatory cytokine IL6. In terms of biological role, in the nucleus, serves as transcriptional co-regulator. Acts as a mediator of transcriptional repression by nuclear hormone receptors via recruitment of histone deacetylases. Functions as an estrogen receptor (ER)-selective coregulator that potentiates the inhibitory activities of antiestrogens and represses the activity of estrogens. Competes with NCOA1 for modulation of ER transcriptional activity. In the plasma membrane, is involved in IGFBP6-induced cell migration. Cooperates with CD86 to mediate CD86-signaling in B lymphocytes that regulates the level of IgG1 produced through the activation of distal signaling intermediates. Upon CD40 engagement, required to activate NF-kappa-B signaling pathway via phospholipase C and protein kinase C activation. In Bos taurus (Bovine), this protein is Prohibitin-2 (PHB2).